A 688-amino-acid chain; its full sequence is Glycine--tRNA ligase beta subunit (688 aa).

Belongs to the class-II aminoacyl-tRNA synthetase family. As to quaternary structure, tetramer of two alpha and two beta subunits.

It localises to the cytoplasm. It carries out the reaction tRNA(Gly) + glycine + ATP = glycyl-tRNA(Gly) + AMP + diphosphate. This Actinobacillus pleuropneumoniae serotype 7 (strain AP76) protein is Glycine--tRNA ligase beta subunit.